The primary structure comprises 535 residues: Sterol 26-hydroxylase, mitochondrial (535 aa).

A mitochondrion-targeting transit peptide spans 1 to 36 (MAALGCARLRWALLGPRVAGCGLCPQGARAKAAIPT). At Lys-286 the chain carries N6-acetyllysine. The interval 387 to 401 (PLLKAVLKETLRLYP) is sterol-binding. Cys-480 is a heme binding site. Residue Lys-524 is modified to N6-acetyllysine.

This sequence belongs to the cytochrome P450 family. In terms of assembly, interacts with HSP70; this interaction is required for initial targeting to mitochondria. Heme is required as a cofactor. In terms of tissue distribution, expressed in all tissues tested. Highest expression in liver and duodenum, followed by adrenal gland and lung. Low expression in kidney and spleen.

The protein resides in the mitochondrion inner membrane. The catalysed reaction is 5beta-cholestane-3alpha,7alpha,12alpha-triol + 6 reduced [adrenodoxin] + 3 O2 + 5 H(+) = (25R)-3alpha,7alpha,12alpha-trihydroxy-5beta-cholestan-26-oate + 6 oxidized [adrenodoxin] + 4 H2O. It catalyses the reaction cholestanol + 2 reduced [adrenodoxin] + O2 + 2 H(+) = (25R)-26-hydroxycholestanol + 2 oxidized [adrenodoxin] + H2O. It carries out the reaction (25R)-3beta-hydroxycholest-5-en-7-one-26-al + 2 reduced [adrenodoxin] + O2 + H(+) = (25R)-3beta-hydroxycholest-5-en-7-one-26-oate + 2 oxidized [adrenodoxin] + H2O. The enzyme catalyses (25R)-3beta,26-dihydroxycholest-5-en-7-one + 2 reduced [adrenodoxin] + O2 + 2 H(+) = (25R)-3beta-hydroxycholest-5-en-7-one-26-al + 2 oxidized [adrenodoxin] + 2 H2O. The catalysed reaction is 7-oxocholesterol + 2 reduced [adrenodoxin] + O2 + 2 H(+) = (25R)-3beta,26-dihydroxycholest-5-en-7-one + 2 oxidized [adrenodoxin] + H2O. It catalyses the reaction calciol + 2 reduced [adrenodoxin] + O2 + 2 H(+) = calcidiol + 2 oxidized [adrenodoxin] + H2O. It carries out the reaction (25R)-5beta-cholestane-3alpha,7alpha,12alpha,26-tetrol + 2 reduced [adrenodoxin] + O2 + 2 H(+) = (25R)-3alpha,7alpha,12alpha-trihydroxy-5beta-cholestan-26-al + 2 oxidized [adrenodoxin] + 2 H2O. The enzyme catalyses 2 reduced [adrenodoxin] + cholesterol + O2 + 2 H(+) = (25R)-cholest-5-ene-3beta,26-diol + 2 oxidized [adrenodoxin] + H2O. The catalysed reaction is (25R)-3beta,4beta-dihydroxycholest-5-en-26-al + 2 reduced [adrenodoxin] + O2 + H(+) = (25R)-3beta,4beta-dihydroxycholest-5-en-26-oate + 2 oxidized [adrenodoxin] + H2O. It catalyses the reaction (25R)-4beta,26-dihydroxycholesterol + 2 reduced [adrenodoxin] + O2 + 2 H(+) = (25R)-3beta,4beta-dihydroxycholest-5-en-26-al + 2 oxidized [adrenodoxin] + 2 H2O. It carries out the reaction 4beta-hydroxycholesterol + 2 reduced [adrenodoxin] + O2 + 2 H(+) = (25R)-4beta,26-dihydroxycholesterol + 2 oxidized [adrenodoxin] + H2O. The enzyme catalyses (25R)-3beta-hydroxy-5-cholesten-26-al + 2 reduced [adrenodoxin] + O2 + H(+) = (25R)-3beta-hydroxy-5-cholestenoate + 2 oxidized [adrenodoxin] + H2O. The catalysed reaction is (25R)-cholest-5-ene-3beta,26-diol + 2 reduced [adrenodoxin] + O2 + 2 H(+) = (25R)-3beta-hydroxy-5-cholesten-26-al + 2 oxidized [adrenodoxin] + 2 H2O. It catalyses the reaction (25R)-3alpha,7alpha,12alpha-trihydroxy-5beta-cholestan-26-al + 2 reduced [adrenodoxin] + O2 + H(+) = (25R)-3alpha,7alpha,12alpha-trihydroxy-5beta-cholestan-26-oate + 2 oxidized [adrenodoxin] + H2O. It carries out the reaction 5beta-cholestane-3alpha,7alpha,12alpha-triol + 2 reduced [adrenodoxin] + O2 + 2 H(+) = (25R)-5beta-cholestane-3alpha,7alpha,12alpha,26-tetrol + 2 oxidized [adrenodoxin] + H2O. It participates in hormone biosynthesis; cholecalciferol biosynthesis. Its pathway is steroid metabolism; cholesterol degradation. The protein operates within lipid metabolism; bile acid biosynthesis. In terms of biological role, cytochrome P450 monooxygenase that catalyzes regio- and stereospecific hydroxylation of cholesterol and its derivatives. Hydroxylates (with R stereochemistry) the terminal methyl group of cholesterol side-chain in a three step reaction to yield at first a C26 alcohol, then a C26 aldehyde and finally a C26 acid. Regulates cholesterol homeostasis by catalyzing the conversion of excess cholesterol to bile acids via both the 'neutral' (classic) and the 'acid' (alternative) pathways. May also regulate cholesterol homeostasis via generation of active oxysterols, which act as ligands for NR1H2 and NR1H3 nuclear receptors, modulating the transcription of genes involved in lipid metabolism. Plays a role in cholestanol metabolism in the cerebellum. Similarly to cholesterol, hydroxylates cholestanol and may facilitate sterol diffusion through the blood-brain barrier to the systemic circulation for further degradation. Also hydroxylates retinal 7-ketocholesterol, a noxious oxysterol with pro-inflammatory and pro-apoptotic effects, and may play a role in its elimination from the retinal pigment epithelium. May play a redundant role in vitamin D biosynthesis. Catalyzes 25-hydroxylation of vitamin D3 that is required for its conversion to a functionally active form. This Oryctolagus cuniculus (Rabbit) protein is Sterol 26-hydroxylase, mitochondrial (CYP27A1).